The primary structure comprises 1342 residues: MVYSYTEKKRIRKDFGKRPQVLDVPYLLSIQLDSFQKFIEQDPEGQYGLEAAFRSVFPIQSYSGNSELQYVSYRLGEPVFDVQECQIRGVTYSAPLRVKLRLVIYEREAPEGTVKDIKEQEVYMGEIPLMTDNGTFVINGTERVIVSQLHRSPGVFFDSDKGKTHSSGKVLYNARIIPYRGSWLDFEFDPKDNLFVRIDRRRKLPATIILRALNYTTEQILDLFFEKVVFEIRDNKLQMELIPERLRGETASFDIEANGKVYVEKGRRITARHIRQLEKDDIKHIEVPVEYIAGKVVSKDYVDESTGELICAANMELSLDLLAKLSQSGHKRIETLFTNDLDHGPYISETVRVDPTNDRLSALVEIYRMMRPGEPPTREAAESLFENLFFSEDRYDLSAVGRMKFNRSLLRDEIEGSGILSKDDIIDVMKKLIDIRNGKGEVDDIDHLGNRRIRSVGEMAENQFRVGLVRVERAVKERLSLGDLDTLMPQDMINAKPISAAVKEFFGSSQLSQFMDQNNPLSEITHKRRISALGPGGLTRERAGFEVRDVHPTHYGRVCPIETPEGPNIGLINSLSVYAQTNEYGFLETPYRRVVDGVVTDEIHYLSAIEEGNYVIAQANSNLDDEGHFVEDLVTCRSKGESSLFSRDQVDYMDVSTQQVVSVGASLIPFLEHDDANRALMGANMQRQAVPTLRADKPLVGTGMERAVAVDSGVTAVAKRGGTVQYVDASRIVIKVNEDEMYPGEAGIDIYNLTKYTRSNQNTCINQMPCVSLGEPVERGDVLADGPSTDLGELALGQNMRVAFMPWNGYNFEDSILVSERVVQEDRFTTIHIQELACVSRDTKLGPEEITADIPNVGEAALSKLDESGIVYIGAEVTGGDILVGKVTPKGETQLTPEEKLLRAIFGEKASDVKDSSLRVPNGVSGTVIDVQVFTRDGVEKDKRALEIEEMQLKQAKKDLSEELQILEAGLFSRIRAVLVSGGVEAEKLDKLPRDRWLELGLTDEEKQNQLEQLAEQYDELKHEFEKKLEAKRRKITQGDDLAPGVLKIVKVYLAVKRRIQPGDKMAGRHGNKGVISKINPIEDMPYDENGTPVDIVLNPLGVPSRMNIGQILETHLGMAAKGIGDKINAMLKQQQEVAKLREFIQRAYDLGADVRQKVDLSTFSDDEVLRLAENLRKGMPIATPVFDGAKEAEIKELLKLGDLPTSGQITLFDGRTGEQFERPVTVGYMYMLKLNHLVDDKMHARSTGSYSLVTQQPLGGKAQFGGQRFGEMEVWALEAYGAAYTLQEMLTVKSDDVNGRTKMYKNIVDGNHQMEPGMPESFNVLLKEIRSLGINIELEDE.

It belongs to the RNA polymerase beta chain family. As to quaternary structure, the RNAP catalytic core consists of 2 alpha, 1 beta, 1 beta' and 1 omega subunit. When a sigma factor is associated with the core the holoenzyme is formed, which can initiate transcription.

It carries out the reaction RNA(n) + a ribonucleoside 5'-triphosphate = RNA(n+1) + diphosphate. DNA-dependent RNA polymerase catalyzes the transcription of DNA into RNA using the four ribonucleoside triphosphates as substrates. The sequence is that of DNA-directed RNA polymerase subunit beta from Salmonella agona (strain SL483).